Here is a 450-residue protein sequence, read N- to C-terminus: Phosphoglucosamine mutase (450 aa).

Catalysis depends on S97, which acts as the Phosphoserine intermediate. Mg(2+) is bound by residues S97, D236, D238, and D240. Residue S97 is modified to Phosphoserine.

The protein belongs to the phosphohexose mutase family. The cofactor is Mg(2+). In terms of processing, activated by phosphorylation.

It carries out the reaction alpha-D-glucosamine 1-phosphate = D-glucosamine 6-phosphate. Functionally, catalyzes the conversion of glucosamine-6-phosphate to glucosamine-1-phosphate. The protein is Phosphoglucosamine mutase of Prochlorococcus marinus (strain MIT 9215).